The following is a 417-amino-acid chain: MIIFNGNKYACASCIRGHRSSTCRHSHRMLIKVRTRGRPSPMAIRDAILVDSTSQSTEYENGAQIEGDCCSAMNQQPILFVRASAVRKARMINGKLHILMEEGFTAHEPKDISTFTDDGNKYITETEFLRKHSPKAPATGTISPDSTKSSSSSEKKERSRLQQEPIRHFSNCCKKDKSQNPASNGKTNKAPSDDIFTPYGSLESTSAFNDILQENYNSSVPGAHDSSETLTPQSTTTIAAPHSSDVASKVEVLTHKGIFLSTQCSCEDESCPCVNCLIHRSEEELNSYIQQSGVPLTNIGEAQITDKMMDYLDDCKCTDKECICPPDNCTCDGCFSHSTNIIPFEKFFFYGILNARLTRKTQIKFKGKLVPSKYWWDFLKLQVPLMTDAQLELLDIHAWFQKLVSNYAPHLSDATTS.

Positions 1–40 form a DNA-binding region, copper-fist; sequence MIIFNGNKYACASCIRGHRSSTCRHSHRMLIKVRTRGRPS. 4 residues coordinate Zn(2+): Cys11, Cys14, Cys23, and His25. 2 disordered regions span residues 128–198 and 216–242; these read FLRK…IFTP and YNSS…AAPH. Phosphoserine is present on Ser143. Residues 153–178 show a composition bias toward basic and acidic residues; sequence SEKKERSRLQQEPIRHFSNCCKKDKS. Polar residues-rich tracts occupy residues 179–190 and 228–238; these read QNPASNGKTNKA and ETLTPQSTTTI. A run of 2 repeats spans residues 264–279 and 322–337. Positions 264-337 are 2 X 16 AA repeat of C-X-C-X(4)-C-X-C-X-X-C-X-X-H; sequence CSCEDESCPC…NCTCDGCFSH (74 aa).

It is found in the nucleus. Regulatory protein involved in Cu/Fe utilization and stress resistance. Involved in basal level transcription of FRE1 and H(2)O(2)-induced transcription of CTT1. Regulates the transcription of CTR1 and CTR3 via the copper ion responsive elements in their promoters. Required for degradation of CTR1. The protein is Metal-binding activator 1 (MAC1) of Saccharomyces cerevisiae (strain ATCC 204508 / S288c) (Baker's yeast).